Consider the following 935-residue polypeptide: MDKDRPGDPALDDNMEEEVPSTSVVQEQVSAGDWENVLIELSDSSSEKEAEDAQLEPAQKGTKRKRVDHDAGGSAPARPMLPPQPDLPGREAILRRFPLDLRTLLQAIGAAATRIDTRAIDQFFGSQISNTEMYIMYAMAIRQAIRDRRRNPASRRDQAKWRLQTLAAGWPMGYQAYSSWMYSYTDHQTAPTFVQLQATLGCTGGRRCHVTFSAGTFKPPRCTPGDRQWLYVQSSVGNIVQSCNPRYSIFFDYMAIHRSLTKIWEEVLTPDQRVSFMEFLGFLQRTDLSYIKSFVSDALGTTSIQTPWIDDNSSTETAQAWNAGFLRGRAYGLDLLRTEGEHVEGATGETREESEDTESDGDDEDLPCIVSRGGPKVKRPPIFIRRLHRLLLMRAGKRTEQGKEVLEKARGSTYGTPRPPVPKPRPEVPQSDETATSHGSAQVPEPPTIHLAAQGMAYPLHEQRGMAPCPVAQAPHTPLPPVSPGDQLPGVSSDGRVACAPVPAPAGPIVRPWEPSLTQAAGQAFAPVRPQHMPVEPVPVPTVALERPVYPKPVRPAPPKIAMQGPGETSGIRRARERWRPAPWTPNPPRSPSQMSVRDRLARLRAEAQVKQASVEVQPPQVTQVSPQQPMEGPGAPFSQVADVVHTPGVPAMQPQYFDLPLIQPISQGAPVAPLRASMGPVPPVPATQPQYFDIPLTEPINQGASAAHFLPQQPMEGPLVPEQWMFPGAALSQSVRPGVAQSQYFDLPLTQPITHGAPAAHFLHQPPMEGPWVPEQWMFQGAPPSQGTDVVQHQLDALGYPLHALNHPGVPVSPAVNQYHLSQAAFGLPIDEDESGEGSDTSEPCEALDLSIHGRPCPQAPEWPVQGEGGQDATEVLDLSIHGRPRPRTPEWPVQGESGQNVTDHEPRRVVVSAIVHMCQDDEFPDLQDPPDEA.

5 disordered regions span residues 1–89, 342–373, 399–446, 611–634, and 883–908; these read MDKD…DLPG, HVEG…VSRG, TEQG…VPEP, KQAS…MEGP, and HGRP…DHEP. Positions 10 to 19 are enriched in acidic residues; the sequence is ALDDNMEEEV. A compositionally biased stretch (polar residues) spans 20–29; sequence PSTSVVQEQV. Residues 352–366 show a composition bias toward acidic residues; it reads EESEDTESDGDDEDL. Over residues 399-410 the composition is skewed to basic and acidic residues; sequence TEQGKEVLEKAR. A compositionally biased stretch (polar residues) spans 431–440; it reads SDETATSHGS. Residues 615–630 are compositionally biased toward low complexity; the sequence is VEVQPPQVTQVSPQQP.

Belongs to the herpesviridae EBNA-3 family. In terms of assembly, interacts with human UCKL1. Interacts with host CTPB1; this interaction seems important for EBNA3-mediated transcriptional repression. Interacts with host RBPJ. Interacts with host USP12 and WDR48; these interactions form a deubiquitination-competent complex.

The protein localises to the host nucleus matrix. Functionally, plays an essential role for activation and immortalization of human B-cells. Represses transcription of viral promoters TP1 and Cp through interaction with host RBPJ, and inhibits EBNA2-mediated activation of these promoters. Since Cp is the promoter for all EBNA mRNAs, EBNA3A probably contributes to a negative autoregulatory control loop. In Homo sapiens (Human), this protein is Epstein-Barr nuclear antigen 3 (EBNA3).